A 205-amino-acid polypeptide reads, in one-letter code: Glycerol-3-phosphate acyltransferase 1 (205 aa).

A run of 5 helical transmembrane segments spans residues 7 to 27, 52 to 74, 78 to 100, 125 to 145, and 160 to 180; these read TLIG…KLFL, WGIL…VYFV, HINI…WNHF, LLIA…PLVF, and AGIV…QDII.

Belongs to the PlsY family. Probably interacts with PlsX.

The protein localises to the cell membrane. It catalyses the reaction an acyl phosphate + sn-glycerol 3-phosphate = a 1-acyl-sn-glycero-3-phosphate + phosphate. It participates in lipid metabolism; phospholipid metabolism. Functionally, catalyzes the transfer of an acyl group from acyl-phosphate (acyl-PO(4)) to glycerol-3-phosphate (G3P) to form lysophosphatidic acid (LPA). This enzyme utilizes acyl-phosphate as fatty acyl donor, but not acyl-CoA or acyl-ACP. This is Glycerol-3-phosphate acyltransferase 1 from Lactobacillus acidophilus (strain ATCC 700396 / NCK56 / N2 / NCFM).